The primary structure comprises 469 residues: uncharacterized protein (469 aa).

A signal peptide spans 1–19; that stretch reads MRINFVLLITLILPWFVSG. The next 7 helical transmembrane spans lie at 199-219, 236-256, 283-303, 305-325, 338-358, 386-406, and 413-433; these read IKST…TWLL, AFWV…MVAI, AYTS…PALV, YYVY…FAPL, ILLK…PFFA, IALA…RPLL, and GFQL…AFLF.

It localises to the membrane. This is an uncharacterized protein from Schizosaccharomyces pombe (strain 972 / ATCC 24843) (Fission yeast).